A 39-amino-acid chain; its full sequence is Photosystem II reaction center protein X (39 aa).

A helical transmembrane segment spans residues 11 to 31 (SLLWGAIVVVIPLSAALLFIS).

This sequence belongs to the PsbX family. Type 1 subfamily. In terms of assembly, PSII is composed of 1 copy each of membrane proteins PsbA, PsbB, PsbC, PsbD, PsbE, PsbF, PsbH, PsbI, PsbJ, PsbK, PsbL, PsbM, PsbT, PsbX, PsbY, PsbZ, Psb30/Ycf12, at least 3 peripheral proteins of the oxygen-evolving complex and a large number of cofactors. It forms dimeric complexes.

It localises to the plastid. The protein localises to the cyanelle thylakoid membrane. In terms of biological role, involved in the binding and/or turnover of quinones at the Q(B) site of photosystem II (PSII). PSII is a light-driven water plastoquinone oxidoreductase, using light energy to abstract electrons from H(2)O, generating a proton gradient subsequently used for ATP formation. The sequence is that of Photosystem II reaction center protein X from Cyanophora paradoxa.